We begin with the raw amino-acid sequence, 374 residues long: Dihydrolipoyllysine-residue acetyltransferase component of acetoin cleaving system (374 aa).

The region spanning 9-84 is the Lipoyl-binding domain; it reads IIPIVMPKWG…PVKALLGVLA (76 aa). K50 is subject to N6-lipoyllysine. In terms of domain architecture, AB hydrolase-1 spans 137-360; the sequence is TVLFIHGFGG…DAGHMSQMEK (224 aa).

(R)-lipoate is required as a cofactor.

The enzyme catalyses N(6)-[(R)-dihydrolipoyl]-L-lysyl-[protein] + acetyl-CoA = N(6)-[(R)-S(8)-acetyldihydrolipoyl]-L-lysyl-[protein] + CoA. Its pathway is ketone degradation; acetoin degradation. Dihydrolipoamide acetyltransferase involved in acetoin catabolism. The polypeptide is Dihydrolipoyllysine-residue acetyltransferase component of acetoin cleaving system (acoC) (Cupriavidus necator (strain ATCC 17699 / DSM 428 / KCTC 22496 / NCIMB 10442 / H16 / Stanier 337) (Ralstonia eutropha)).